Reading from the N-terminus, the 140-residue chain is Putative pre-16S rRNA nuclease (140 aa).

This sequence belongs to the YqgF nuclease family.

It is found in the cytoplasm. In terms of biological role, could be a nuclease involved in processing of the 5'-end of pre-16S rRNA. The protein is Putative pre-16S rRNA nuclease of Aeromonas hydrophila.